The primary structure comprises 557 residues: Suprabasin (557 aa).

An N-terminal signal peptide occupies residues 1-23; the sequence is MHLASLLSSCSLLLLLGALPGWA. Disordered regions lie at residues 150 to 175, 422 to 441, 464 to 490, and 509 to 533; these read RFGQ…GAHH, GQGA…KVAQ, AAGQ…GKQE, and NQLL…TTLT. Low complexity predominate over residues 153 to 175; it reads QGAHHATGQAGKEAEKFGQGAHH. Over residues 476 to 487 the composition is skewed to low complexity; it reads GQGVHHAAGQAG.

The protein resides in the secreted. The polypeptide is Suprabasin (SBSN) (Bos taurus (Bovine)).